The sequence spans 440 residues: Trigger factor (440 aa).

Residues 163-248 (GDTVVIDFKG…VHEVKTKELP (86 aa)) form the PPIase FKBP-type domain.

It belongs to the FKBP-type PPIase family. Tig subfamily.

The protein resides in the cytoplasm. The catalysed reaction is [protein]-peptidylproline (omega=180) = [protein]-peptidylproline (omega=0). In terms of biological role, involved in protein export. Acts as a chaperone by maintaining the newly synthesized protein in an open conformation. Functions as a peptidyl-prolyl cis-trans isomerase. The polypeptide is Trigger factor (Lactiplantibacillus plantarum (strain ATCC BAA-793 / NCIMB 8826 / WCFS1) (Lactobacillus plantarum)).